Reading from the N-terminus, the 262-residue chain is Demethyldecarbamoylnovobiocin O-methyltransferase (262 aa).

An S-adenosyl-L-methionine-binding site is contributed by 64-65 (TM). Glutamate 72 acts as the Proton acceptor in catalysis. S-adenosyl-L-methionine-binding positions include 92–96 (ETGVW), 122–126 (DSFQG), phenylalanine 178, 196–197 (DG), and serine 202. Mg(2+) is bound at residue aspartate 196. Mg(2+) contacts are provided by aspartate 223 and aspartate 224.

The protein belongs to the methyltransferase TylF/MycF family. As to quaternary structure, homodimer. Mg(2+) serves as cofactor.

It carries out the reaction desmethyldescarbamoylnovobiocin + S-adenosyl-L-methionine = descarbamoylnovobiocin + S-adenosyl-L-homocysteine + H(+). The protein operates within antibiotic biosynthesis; novobiocin biosynthesis. Its function is as follows. S-adenosyl-L-methionine-dependent O-methyltransferase that methylates at 4-OH of the noviose moiety, the penultimate step in the novobiocin biosynthesis pathway. Novobiocin is an aminocoumarin family antibiotic that targets bacterial DNA gyrases. The polypeptide is Demethyldecarbamoylnovobiocin O-methyltransferase (novP) (Streptomyces niveus (Streptomyces spheroides)).